Consider the following 58-residue polypeptide: UPF0391 membrane protein Sbal_1421 (58 aa).

The next 2 membrane-spanning stretches (helical) occupy residues 6–26 (LVFL…IAGA) and 28–48 (AGIA…SLLV).

The protein belongs to the UPF0391 family.

The protein resides in the cell membrane. The protein is UPF0391 membrane protein Sbal_1421 of Shewanella baltica (strain OS155 / ATCC BAA-1091).